The chain runs to 142 residues: Clock-controlled protein 6 (142 aa).

This sequence belongs to the SED1 family.

The chain is Clock-controlled protein 6 (ccg-6) from Neurospora crassa (strain ATCC 24698 / 74-OR23-1A / CBS 708.71 / DSM 1257 / FGSC 987).